A 520-amino-acid chain; its full sequence is Transposase for insertion sequence element IS21-like (520 aa).

Positions 13–78 constitute an HTH IS21-type domain; the sequence is YMWYKVRELQ…KYEEYVRGTL (66 aa). The Integrase catalytic domain maps to 136–312; sequence LPETPYGEYA…VPSEEFAVEK (177 aa).

Belongs to the transposase IS21/IS408/IS1162 family.

Its function is as follows. Involved in the transposition of the insertion sequence. The polypeptide is Transposase for insertion sequence element IS21-like (tnpA) (Bacteroides fragilis).